A 569-amino-acid chain; its full sequence is Glutamyl-tRNA reductase (569 aa).

Substrate-binding positions include 49–52 (TCNR), S109, 114–116 (EGQ), and Q120. C50 serves as the catalytic Nucleophile. 192–197 (GAGSMS) serves as a coordination point for NADP(+). An insert region spans residues 284 to 397 (PVAVREETPA…VEAPRPAPAL (114 aa)). The segment at 546 to 569 (AAVSRADDRDTSDSTENAKNRGRE) is disordered. Basic and acidic residues predominate over residues 550–569 (RADDRDTSDSTENAKNRGRE).

This sequence belongs to the glutamyl-tRNA reductase family. As to quaternary structure, homodimer.

It catalyses the reaction (S)-4-amino-5-oxopentanoate + tRNA(Glu) + NADP(+) = L-glutamyl-tRNA(Glu) + NADPH + H(+). Its pathway is porphyrin-containing compound metabolism; protoporphyrin-IX biosynthesis; 5-aminolevulinate from L-glutamyl-tRNA(Glu): step 1/2. In terms of biological role, catalyzes the NADPH-dependent reduction of glutamyl-tRNA(Glu) to glutamate 1-semialdehyde (GSA). The sequence is that of Glutamyl-tRNA reductase from Streptomyces avermitilis (strain ATCC 31267 / DSM 46492 / JCM 5070 / NBRC 14893 / NCIMB 12804 / NRRL 8165 / MA-4680).